Consider the following 428-residue polypeptide: MTESERKQIIALIQREVIPAIGCTEPIAVALCVAKATETLGAKPEKIKVLLSANILKNAMGVGIPGTGMIGLPIAVALGALIGKSDYQLEVLKDSTPEAVEEGKKLIDEKRICISLKEDITEKLYIEVTCEAGGEQATAIISGGHTTFVYVAKGDEVLLNKQQTSGEEEKEETLELTLRKVYDFALTAPLDEIRFILETARLNKKAAEQSFQGDYGHALGKMLRGTYEHKIMGDSVFSHILSYTSAACDARMAGAMIPVMSNSGSGNQGISATLPVVVYAEENGKSEEELIRALMMSHLTVIYIKQSLGRLSALCGCVVAATGSSCGITWLMGGSYKQVAFAVQNMIANLTGMICDGAKPSCALKVTTGVSTAVLSAVMAMENRCVTSVEGIIDEDVDQSIRNLTRIGSQGMNETDRVVLDIMTHKGC.

The protein belongs to the UPF0597 family.

This Bacteroides fragilis (strain ATCC 25285 / DSM 2151 / CCUG 4856 / JCM 11019 / LMG 10263 / NCTC 9343 / Onslow / VPI 2553 / EN-2) protein is UPF0597 protein BF3560.